The primary structure comprises 508 residues: Photosystem II CP47 reaction center protein (508 aa).

6 helical membrane-spanning segments follow: residues 21–36 (SVHI…WAGS), 101–115 (IMLS…IWHW), 140–156 (GIHL…FGAF), 203–218 (IAAG…FHLS), 237–252 (VLSS…AFVV), and 457–472 (SFAL…HGAR).

Belongs to the PsbB/PsbC family. PsbB subfamily. As to quaternary structure, PSII is composed of 1 copy each of membrane proteins PsbA, PsbB, PsbC, PsbD, PsbE, PsbF, PsbH, PsbI, PsbJ, PsbK, PsbL, PsbM, PsbT, PsbX, PsbY, PsbZ, Psb30/Ycf12, at least 3 peripheral proteins of the oxygen-evolving complex and a large number of cofactors. It forms dimeric complexes. Binds multiple chlorophylls. PSII binds additional chlorophylls, carotenoids and specific lipids. is required as a cofactor.

Its subcellular location is the plastid. The protein resides in the chloroplast thylakoid membrane. Its function is as follows. One of the components of the core complex of photosystem II (PSII). It binds chlorophyll and helps catalyze the primary light-induced photochemical processes of PSII. PSII is a light-driven water:plastoquinone oxidoreductase, using light energy to abstract electrons from H(2)O, generating O(2) and a proton gradient subsequently used for ATP formation. The polypeptide is Photosystem II CP47 reaction center protein (Piper cenocladum (Ant piper)).